Reading from the N-terminus, the 941-residue chain is UvrABC system protein A (941 aa).

31 to 38 (GLSGSGKS) contributes to the ATP binding site. Residues 253-280 (CPICGYSMRELEPRLFSFNNPAGACPTC) form a C4-type zinc finger. 2 consecutive ABC transporter domains span residues 310-587 (WDRR…PESL) and 607-937 (ANPE…RFLK). 640–647 (GVSGSGKS) lines the ATP pocket. A C4-type zinc finger spans residues 740–766 (CEACQGDGVIKVEMHFLPDIYVPCDQC).

It belongs to the ABC transporter superfamily. UvrA family. As to quaternary structure, forms a heterotetramer with UvrB during the search for lesions.

It localises to the cytoplasm. In terms of biological role, the UvrABC repair system catalyzes the recognition and processing of DNA lesions. UvrA is an ATPase and a DNA-binding protein. A damage recognition complex composed of 2 UvrA and 2 UvrB subunits scans DNA for abnormalities. When the presence of a lesion has been verified by UvrB, the UvrA molecules dissociate. The polypeptide is UvrABC system protein A (Salmonella typhi).